The sequence spans 239 residues: Ribonuclease PH (239 aa).

Residues arginine 86 and 124-126 contribute to the phosphate site; that span reads GTR.

The protein belongs to the RNase PH family. Homohexameric ring arranged as a trimer of dimers.

The enzyme catalyses tRNA(n+1) + phosphate = tRNA(n) + a ribonucleoside 5'-diphosphate. Its function is as follows. Phosphorolytic 3'-5' exoribonuclease that plays an important role in tRNA 3'-end maturation. Removes nucleotide residues following the 3'-CCA terminus of tRNAs; can also add nucleotides to the ends of RNA molecules by using nucleoside diphosphates as substrates, but this may not be physiologically important. Probably plays a role in initiation of 16S rRNA degradation (leading to ribosome degradation) during starvation. The protein is Ribonuclease PH of Anaeromyxobacter dehalogenans (strain 2CP-C).